The following is a 246-amino-acid chain: Acetoacetate decarboxylase (246 aa).

Catalysis depends on K116, which acts as the Schiff-base intermediate with acetoacetate.

Belongs to the ADC family.

The catalysed reaction is acetoacetate + H(+) = acetone + CO2. Its function is as follows. Catalyzes the conversion of acetoacetate to acetone and carbon dioxide. The sequence is that of Acetoacetate decarboxylase from Burkholderia ambifaria (strain MC40-6).